A 353-amino-acid chain; its full sequence is Photosystem II protein D1 (353 aa).

The residue at position 2 (Thr-2) is an N-acetylthreonine. A Phosphothreonine modification is found at Thr-2. 3 helical membrane-spanning segments follow: residues 29-46 (YIGWFGVLMIPTLLTATS), 118-133 (HFLLGVACYMGREWEL), and 142-156 (WIAVAYSAPVAAATA). His-118 is a binding site for chlorophyll a. Tyr-126 is a pheophytin a binding site. [CaMn4O5] cluster contacts are provided by Asp-170 and Glu-189. Residues 197–218 (FHMLGVAGVFGGSLFSAMHGSL) traverse the membrane as a helical segment. Chlorophyll a is bound at residue His-198. A quinone-binding positions include His-215 and 264 to 265 (SF). Position 215 (His-215) interacts with Fe cation. His-272 provides a ligand contact to Fe cation. The chain crosses the membrane as a helical span at residues 274-288 (FLAAWPVVGIWFTAL). Residues His-332, Glu-333, Asp-342, and Ala-344 each contribute to the [CaMn4O5] cluster site. Residues 345 to 353 (AVEAPAVNG) constitute a propeptide that is removed on maturation.

Belongs to the reaction center PufL/M/PsbA/D family. As to quaternary structure, PSII is composed of 1 copy each of membrane proteins PsbA, PsbB, PsbC, PsbD, PsbE, PsbF, PsbH, PsbI, PsbJ, PsbK, PsbL, PsbM, PsbT, PsbX, PsbY, PsbZ, Psb30/Ycf12, at least 3 peripheral proteins of the oxygen-evolving complex and a large number of cofactors. It forms dimeric complexes. The cofactor is The D1/D2 heterodimer binds P680, chlorophylls that are the primary electron donor of PSII, and subsequent electron acceptors. It shares a non-heme iron and each subunit binds pheophytin, quinone, additional chlorophylls, carotenoids and lipids. D1 provides most of the ligands for the Mn4-Ca-O5 cluster of the oxygen-evolving complex (OEC). There is also a Cl(-1) ion associated with D1 and D2, which is required for oxygen evolution. The PSII complex binds additional chlorophylls, carotenoids and specific lipids.. Post-translationally, tyr-161 forms a radical intermediate that is referred to as redox-active TyrZ, YZ or Y-Z. C-terminally processed by CTPA; processing is essential to allow assembly of the oxygen-evolving complex and thus photosynthetic growth.

It is found in the plastid. Its subcellular location is the chloroplast thylakoid membrane. The enzyme catalyses 2 a plastoquinone + 4 hnu + 2 H2O = 2 a plastoquinol + O2. Photosystem II (PSII) is a light-driven water:plastoquinone oxidoreductase that uses light energy to abstract electrons from H(2)O, generating O(2) and a proton gradient subsequently used for ATP formation. It consists of a core antenna complex that captures photons, and an electron transfer chain that converts photonic excitation into a charge separation. The D1/D2 (PsbA/PsbD) reaction center heterodimer binds P680, the primary electron donor of PSII as well as several subsequent electron acceptors. This chain is Photosystem II protein D1, found in Marchantia polymorpha (Common liverwort).